Consider the following 1133-residue polypeptide: Protein TOPLESS-RELATED PROTEIN 2 (1133 aa).

The LisH domain occupies 4–36; sequence LSRELVFLILQFLDEEKFKETVHKLEQESAFYF. A CTLH domain is found at 34 to 92; the sequence is FYFNMKHFEDLVQGGEWDEVEKYLSGFTKVEDNRYSMKIFFEIRKQKYLEALDRHDRAK. 12 WD repeats span residues 344 to 384, 451 to 492, 495 to 536, 539 to 582, 586 to 625, 630 to 669, 771 to 810, 838 to 876, 879 to 919, 922 to 961, 970 to 1011, and 1015 to 1054; these read NQGS…RIAH, AHIG…KQYT, GHEA…SRVD, APGH…IKRT, FRKR…ILTT, GGLP…RLLR, ATSS…RNPN, NPEE…VMTT, APPP…VKSK, GHSK…KKKS, RSGA…RSWS, and ALPA…LRCR. The interval 1102–1133 is disordered; it reads DSDPKWGVAPPQDNGTHPTISAAPAAANKPEV.

In terms of assembly, tetramer. Interacts with D53, probably via the EAR motifs. Binds to AP2-1/TOE1, AP2-3/SNB and AP2-2/IDS1. Interacts with WOX1. Interacts with MOF1. As to expression, expressed in stems and panicles. Detected in roots, seeds, leaves and sheath. Expressed in the meristem and lateral organ primordia.

It is found in the nucleus. In terms of biological role, transcriptional corepressor involved in branch formation regulation, presumably by suppressing primary branch formation and promoting secondary branch formation. Required for the cell elongation in the first internode and pollen development. Probable downstream regulator of strigolactones signaling important in axillary meristem maintenance. Acts in auxin signaling and is associated with the regulation of histone deacetylation. Essential for the function of miR172 microRNA and its target genes in regulating panicle development. The sequence is that of Protein TOPLESS-RELATED PROTEIN 2 from Oryza sativa subsp. japonica (Rice).